Here is a 227-residue protein sequence, read N- to C-terminus: Octanoyltransferase (227 aa).

The 179-residue stretch at 34 to 212 (RQREDGLMLL…AFAEVFPVTW (179 aa)) folds into the BPL/LPL catalytic domain. Substrate contacts are provided by residues 76-83 (RGGEVTYH), 143-145 (AIA), and 156-158 (GFA). Cys-174 (acyl-thioester intermediate) is an active-site residue.

The protein belongs to the LipB family.

The protein localises to the cytoplasm. It catalyses the reaction octanoyl-[ACP] + L-lysyl-[protein] = N(6)-octanoyl-L-lysyl-[protein] + holo-[ACP] + H(+). It participates in protein modification; protein lipoylation via endogenous pathway; protein N(6)-(lipoyl)lysine from octanoyl-[acyl-carrier-protein]: step 1/2. In terms of biological role, catalyzes the transfer of endogenously produced octanoic acid from octanoyl-acyl-carrier-protein onto the lipoyl domains of lipoate-dependent enzymes. Lipoyl-ACP can also act as a substrate although octanoyl-ACP is likely to be the physiological substrate. The polypeptide is Octanoyltransferase (Synechocystis sp. (strain ATCC 27184 / PCC 6803 / Kazusa)).